Reading from the N-terminus, the 479-residue chain is Pup--protein ligase (479 aa).

Glutamate 17 contacts Mg(2+). An ATP-binding site is contributed by arginine 62. Residue tyrosine 64 participates in Mg(2+) binding. Aspartate 66 serves as the catalytic Proton acceptor. Glutamate 72 lines the Mg(2+) pocket. Residues serine 75 and tryptophan 432 each coordinate ATP.

The protein belongs to the Pup ligase/Pup deamidase family. Pup-conjugating enzyme subfamily.

It catalyses the reaction ATP + [prokaryotic ubiquitin-like protein]-L-glutamate + [protein]-L-lysine = ADP + phosphate + N(6)-([prokaryotic ubiquitin-like protein]-gamma-L-glutamyl)-[protein]-L-lysine.. Its pathway is protein degradation; proteasomal Pup-dependent pathway. It functions in the pathway protein modification; protein pupylation. Catalyzes the covalent attachment of the prokaryotic ubiquitin-like protein modifier Pup to the proteasomal substrate proteins, thereby targeting them for proteasomal degradation. This tagging system is termed pupylation. The ligation reaction involves the side-chain carboxylate of the C-terminal glutamate of Pup and the side-chain amino group of a substrate lysine. The chain is Pup--protein ligase from Corynebacterium diphtheriae (strain ATCC 700971 / NCTC 13129 / Biotype gravis).